Reading from the N-terminus, the 321-residue chain is Chemotaxis protein CheV1 (321 aa).

The CheW-like domain occupies 19–177; it reads ELQLLCFRLG…IEKMLIDVFP (159 aa). The 122-residue stretch at 198 to 319 folds into the Response regulatory domain; sequence CVLLADDSPS…IQRVVKQFLE (122 aa). 4-aspartylphosphate is present on D252.

Functionally, plays an essential role in chemotaxis signal transduction system in order to colonize the host stomach. May act as a phosphate sink to control the flow of phosphate to CheAY. This chain is Chemotaxis protein CheV1, found in Helicobacter pylori (strain ATCC 700392 / 26695) (Campylobacter pylori).